The sequence spans 358 residues: Peptide chain release factor 1 (358 aa).

Gln-233 carries the post-translational modification N5-methylglutamine.

Belongs to the prokaryotic/mitochondrial release factor family. Post-translationally, methylated by PrmC. Methylation increases the termination efficiency of RF1.

The protein localises to the cytoplasm. Peptide chain release factor 1 directs the termination of translation in response to the peptide chain termination codons UAG and UAA. In Staphylococcus carnosus (strain TM300), this protein is Peptide chain release factor 1.